We begin with the raw amino-acid sequence, 469 residues long: Trigger factor (469 aa).

Residues 165–250 (GDRVTIDYIG…VKAVCKSDEL (86 aa)) enclose the PPIase FKBP-type domain. Basic and acidic residues predominate over residues 444–460 (DLTEKKPLKKKTAEKVS). The tract at residues 444–469 (DLTEKKPLKKKTAEKVSTKKKAPKKS) is disordered.

This sequence belongs to the FKBP-type PPIase family. Tig subfamily.

The protein resides in the cytoplasm. It carries out the reaction [protein]-peptidylproline (omega=180) = [protein]-peptidylproline (omega=0). Involved in protein export. Acts as a chaperone by maintaining the newly synthesized protein in an open conformation. Functions as a peptidyl-prolyl cis-trans isomerase. The chain is Trigger factor from Bartonella henselae (strain ATCC 49882 / DSM 28221 / CCUG 30454 / Houston 1) (Rochalimaea henselae).